Consider the following 362-residue polypeptide: Flagellar P-ring protein (362 aa).

An N-terminal signal peptide occupies residues 1–18 (MKHIALIVLYFLSFSVQA).

Belongs to the FlgI family. As to quaternary structure, the basal body constitutes a major portion of the flagellar organelle and consists of four rings (L,P,S, and M) mounted on a central rod.

It is found in the periplasm. The protein resides in the bacterial flagellum basal body. Functionally, assembles around the rod to form the L-ring and probably protects the motor/basal body from shearing forces during rotation. In Marinomonas sp. (strain MWYL1), this protein is Flagellar P-ring protein.